Consider the following 181-residue polypeptide: Cyclic AMP-dependent transcription factor ATF-3 (181 aa).

The segment at 73–97 (EMSVTKSEAAPEEDERKRRRRERNK) is disordered. Lys-78 is covalently cross-linked (Glycyl lysine isopeptide (Lys-Gly) (interchain with G-Cter in SUMO2)). The bZIP domain maps to 86–149 (DERKRRRRER…QHLIYMLNLH (64 aa)). Residues 88–110 (RKRRRRERNKIAAAKCRNKKKEK) are basic motif. Residues 114-142 (LQKESEKLESVNAELKAQIEELKNEKQHL) are leucine-zipper. At Thr-162 the chain carries Phosphothreonine. Lys-175 is covalently cross-linked (Glycyl lysine isopeptide (Lys-Gly) (interchain with G-Cter in SUMO2)).

Belongs to the bZIP family. ATF subfamily. Binds DNA as a homodimer or a heterodimer. Interacts with KAT5; promoting KAT5 autoacetylation and KAT5 deubiquitination by USP7.

The protein resides in the nucleus. Its function is as follows. This protein binds the cAMP response element (CRE) (consensus: 5'-GTGACGT[AC][AG]-3'), a sequence present in many viral and cellular promoters. Represses transcription from promoters with ATF sites. It may repress transcription by stabilizing the binding of inhibitory cofactors at the promoter. This Mus musculus (Mouse) protein is Cyclic AMP-dependent transcription factor ATF-3.